Reading from the N-terminus, the 339-residue chain is UDP-N-acetylenolpyruvoylglucosamine reductase (339 aa).

The 173-residue stretch at 16–188 (GIAATARYYS…LQVTLRLNKQ (173 aa)) folds into the FAD-binding PCMH-type domain. The active site involves arginine 164. The active-site Proton donor is serine 238. Glutamate 334 is an active-site residue.

Belongs to the MurB family. It depends on FAD as a cofactor.

The protein resides in the cytoplasm. The catalysed reaction is UDP-N-acetyl-alpha-D-muramate + NADP(+) = UDP-N-acetyl-3-O-(1-carboxyvinyl)-alpha-D-glucosamine + NADPH + H(+). Its pathway is cell wall biogenesis; peptidoglycan biosynthesis. Cell wall formation. The protein is UDP-N-acetylenolpyruvoylglucosamine reductase of Amoebophilus asiaticus (strain 5a2).